The chain runs to 403 residues: 26S proteasome regulatory subunit 8 (403 aa).

ATP is bound at residue 186 to 193; sequence GPPGTGKT.

The protein belongs to the AAA ATPase family.

The protein resides in the cytoplasm. It is found in the nucleus. Its function is as follows. The 26S proteasome is involved in the ATP-dependent degradation of ubiquitinated proteins. The regulatory (or ATPase) complex confers ATP dependency and substrate specificity to the 26S complex. This chain is 26S proteasome regulatory subunit 8 (psmC5), found in Dictyostelium discoideum (Social amoeba).